The primary structure comprises 673 residues: Kinesin-like protein KIFC1 (673 aa).

A phosphoserine mark is found at serine 6, serine 26, serine 31, and serine 33. 2 disordered regions span residues 23–94 and 109–136; these read KAPS…TGPR and VPAV…KRPA. Positions 60–86 are enriched in polar residues; the sequence is TKITTSHPRVPSLTTVPQTQGQTTAQK. Positions 142–306 form a coiled coil; sequence QLCDLNAELK…RRRLHNQLQE (165 aa). A Kinesin motor domain is found at 310–663; that stretch reads NIRVFCRVRP…LRFASKVNQC (354 aa). Residues 325–372 form a disordered region; it reads PTPPPGLLLFPSGPGGPSDPPTRLSLSRSDERRGTLSGAPAPPTRHDF. Position 359 is a phosphothreonine (threonine 359). Position 410-417 (410-417) interacts with ATP; that stretch reads GQTGSGKT.

Belongs to the TRAFAC class myosin-kinesin ATPase superfamily. Kinesin family. NCD subfamily. In terms of assembly, binds NUBP1 and NUBP2. Interacts with PPP1R42.

It localises to the nucleus. Its subcellular location is the cytoplasm. The protein resides in the cytoskeleton. The protein localises to the microtubule organizing center. It is found in the centrosome. It localises to the spindle. Its subcellular location is the early endosome. Minus end-directed microtubule-dependent motor required for bipolar spindle formation. May contribute to movement of early endocytic vesicles. Regulates cilium formation and structure. In Homo sapiens (Human), this protein is Kinesin-like protein KIFC1 (KIFC1).